Here is a 263-residue protein sequence, read N- to C-terminus: 3'-5' ssDNA/RNA exonuclease TatD (263 aa).

The a divalent metal cation site is built by glutamate 91, histidine 127, and histidine 152.

The protein belongs to the metallo-dependent hydrolases superfamily. TatD-type hydrolase family. TatD subfamily. Monomer. Requires Mg(2+) as cofactor.

It is found in the cytoplasm. In terms of biological role, 3'-5' exonuclease that prefers single-stranded DNA and RNA. May play a role in the H(2)O(2)-induced DNA damage repair. This chain is 3'-5' ssDNA/RNA exonuclease TatD, found in Klebsiella pneumoniae (strain 342).